A 606-amino-acid chain; its full sequence is WD repeat-containing protein 1 (606 aa).

13 WD repeats span residues 4–45 (EIKK…LRNI), 48–87 (PAIA…IWDT), 93–135 (LLKY…LWDT), 138–176 (SVGE…FFEG), 180–218 (KFKF…IYDG), 224–263 (VCAL…IWDV), 270–306 (STFP…YLDK), 311–351 (KPLR…YWDS), 358–408 (SFSG…KLDV), 432–474 (LKDQ…VYSI), 480–518 (KDEG…VFSV), 523–561 (SENN…VWTL), and 566–604 (TKVK…EWTI). Residues lysine 28, lysine 81, lysine 95, and lysine 115 each carry the N6-acetyllysine modification. A Phosphotyrosine modification is found at tyrosine 238. Residue lysine 480 is modified to N6-acetyllysine.

The protein belongs to the WD repeat AIP1 family.

Its subcellular location is the cytoplasm. It is found in the cytoskeleton. It localises to the cell projection. The protein localises to the podosome. Induces disassembly of actin filaments in conjunction with ADF/cofilin family proteins. Enhances cofilin-mediated actin severing. Involved in cytokinesis. Involved in chemotactic cell migration by restricting lamellipodial membrane protrusions. Involved in myocardium sarcomere organization. Required for cardiomyocyte growth at the postnatal and maintenance at the adult stage. Involved in neutrophil actin dynamics and migration. Involved in megakaryocyte maturation and platelet shedding. Required for the establishment of planar cell polarity (PCP) during follicular epithelium development and for cell shape changes during PCP; the function seems to implicate cooperation with CFL1 and/or DSTN/ADF. Involved in the generation/maintenance of cortical tension. Involved in assembly and maintenance of epithelial apical cell junctions and plays a role in the organization of the perijunctional actomyosin belt. This chain is WD repeat-containing protein 1 (Wdr1), found in Mus musculus (Mouse).